The following is a 1422-amino-acid chain: DNA-directed RNA polymerase subunit beta (1422 aa).

The tract at residues 1392–1422 (QAAREAAERDLGGGPLGAPRGAVASGEKSSA) is disordered.

The protein belongs to the RNA polymerase beta chain family. In terms of assembly, the RNAP catalytic core consists of 2 alpha, 1 beta, 1 beta' and 1 omega subunit. When a sigma factor is associated with the core the holoenzyme is formed, which can initiate transcription.

The enzyme catalyses RNA(n) + a ribonucleoside 5'-triphosphate = RNA(n+1) + diphosphate. Functionally, DNA-dependent RNA polymerase catalyzes the transcription of DNA into RNA using the four ribonucleoside triphosphates as substrates. The polypeptide is DNA-directed RNA polymerase subunit beta (Anaeromyxobacter dehalogenans (strain 2CP-C)).